Consider the following 485-residue polypeptide: Acyltransferase cm3D (485 aa).

The active-site Proton acceptor is histidine 169.

The protein belongs to the plant acyltransferase family. As to quaternary structure, monomer.

It participates in secondary metabolite biosynthesis. Its function is as follows. Acyltransferase; part of the gene cluster that mediates the biosynthesis of beauveriolides I and III, cyclodepsipeptides acting as inhibitors of the acyl-CoA:cholesterol acyltransferase. The HR-PKS cm3B initiates the biosynthesis of beauveriolides by iteratively catalyzing the formation of the linear polyketide chain. The ATP-dependent acetyl-CoA ligase cm3D converts the polyketide carboxylic acid to a CoA thioester which id shuttled to the first T domain in the NRPS cm3A by the acetyltransferase cm3C. Cm3A contains 13 domains and assembles the polyketide chain, L-phenylalanine, L-alanine, and D-leucine (or D-allo-isoleucine) to form beauveriolide I (or beauveriolide III). The production of both beauveriolides I and III suggests the substrate adaptability of cm3B, using different amino acids as substrates. This Cordyceps militaris (strain CM01) (Caterpillar fungus) protein is Acyltransferase cm3D.